Consider the following 663-residue polypeptide: UvrABC system protein B (663 aa).

In terms of domain architecture, Helicase ATP-binding spans 31-271 (DNIESGEKAQ…EQSISKIQAE (241 aa)). Position 44–51 (44–51 (GATGTGKT)) interacts with ATP. Positions 97 to 120 (YYDYYQPEAYVPSSDTYIEKDSSV) match the Beta-hairpin motif. In terms of domain architecture, Helicase C-terminal spans 435–601 (QMDDLLGEIN…TIKKDIRDLI (167 aa)). One can recognise a UVR domain in the interval 627–662 (QEAIKQLQKNMQEAAELLDFELAAQLRDLILELKAI).

The protein belongs to the UvrB family. Forms a heterotetramer with UvrA during the search for lesions. Interacts with UvrC in an incision complex.

It is found in the cytoplasm. The UvrABC repair system catalyzes the recognition and processing of DNA lesions. A damage recognition complex composed of 2 UvrA and 2 UvrB subunits scans DNA for abnormalities. Upon binding of the UvrA(2)B(2) complex to a putative damaged site, the DNA wraps around one UvrB monomer. DNA wrap is dependent on ATP binding by UvrB and probably causes local melting of the DNA helix, facilitating insertion of UvrB beta-hairpin between the DNA strands. Then UvrB probes one DNA strand for the presence of a lesion. If a lesion is found the UvrA subunits dissociate and the UvrB-DNA preincision complex is formed. This complex is subsequently bound by UvrC and the second UvrB is released. If no lesion is found, the DNA wraps around the other UvrB subunit that will check the other stand for damage. This is UvrABC system protein B from Streptococcus equi subsp. zooepidemicus (strain MGCS10565).